The primary structure comprises 146 residues: Ribonuclease H (146 aa).

Positions 1–143 (MQKKVTIYTD…CDYLATQAIK (143 aa)) constitute an RNase H type-1 domain. 4 residues coordinate Mg(2+): Asp-10, Glu-48, Asp-70, and Asp-135.

Belongs to the RNase H family. As to quaternary structure, monomer. Requires Mg(2+) as cofactor.

The protein localises to the cytoplasm. It carries out the reaction Endonucleolytic cleavage to 5'-phosphomonoester.. Endonuclease that specifically degrades the RNA of RNA-DNA hybrids. This chain is Ribonuclease H, found in Chlorobium phaeobacteroides (strain BS1).